Consider the following 349-residue polypeptide: MNIQQALNHITKNIHLTQPQMEEIMRSIMQGEATEAQIGALMMGLRMKGESIDEMTAAARVMREFAIKIDVSDIKHLVDIVGTGGDGQNLFNVSTASSFVIAAAGATIAKHGNRGVSSKSGSSDLLEQAGIHLDLDMQQTERCIREMGVGFLFAPNHHKAMKYAAGPRRELGIRSIFNLLGPLTNPAGVKRFVIGVFSDELCRPIAEVMKQLGAEHVMVVHSKDGLDEISLAAPTTIAELKDGEITEWTLNPEDVGIESQTLNGLVVADATASLKLIKDALSKNKSDIGEKAANMIALNAGAGIYVAGITKTYAQAVAFAQDIIYGGQALEKMSVLAEFTKTLKQSQAD.

5-phospho-alpha-D-ribose 1-diphosphate is bound by residues glycine 82, 85 to 86 (GD), 92 to 95 (NVST), 110 to 118 (KHGNRGVSS), and serine 122. Anthranilate is bound at residue glycine 82. Serine 94 is a binding site for Mg(2+). Asparagine 113 provides a ligand contact to anthranilate. Arginine 168 is an anthranilate binding site. Mg(2+) is bound by residues aspartate 227 and glutamate 228.

It belongs to the anthranilate phosphoribosyltransferase family. Homodimer. The cofactor is Mg(2+).

The enzyme catalyses N-(5-phospho-beta-D-ribosyl)anthranilate + diphosphate = 5-phospho-alpha-D-ribose 1-diphosphate + anthranilate. It participates in amino-acid biosynthesis; L-tryptophan biosynthesis; L-tryptophan from chorismate: step 2/5. Functionally, catalyzes the transfer of the phosphoribosyl group of 5-phosphorylribose-1-pyrophosphate (PRPP) to anthranilate to yield N-(5'-phosphoribosyl)-anthranilate (PRA). This chain is Anthranilate phosphoribosyltransferase, found in Acinetobacter baumannii (strain ATCC 17978 / DSM 105126 / CIP 53.77 / LMG 1025 / NCDC KC755 / 5377).